We begin with the raw amino-acid sequence, 337 residues long: Diacylglycerol O-acyltransferase 2-like protein 6 (337 aa).

Transmembrane regions (helical) follow at residues Met22–Phe42 and Tyr102–Thr122.

Belongs to the diacylglycerol acyltransferase family.

Its subcellular location is the endoplasmic reticulum membrane. The catalysed reaction is 1,2-di-(9Z-octadecenoyl)-sn-glycerol + (9Z)-octadecenoyl-CoA = 1,2,3-tri-(9Z-octadecenoyl)-glycerol + CoA. In terms of biological role, diglyceride acyltransferase that uses fatty acyl-CoA as substrate. Particularly active with oleate as a substrate. Has no wax synthase activity to produce wax esters. This chain is Diacylglycerol O-acyltransferase 2-like protein 6 (DGAT2L6), found in Bos taurus (Bovine).